The sequence spans 85 residues: ATP synthase subunit c (85 aa).

The next 2 helical transmembrane spans lie at 10 to 30 and 53 to 73; these read IAVS…FGIL and FIVA…ALLF.

It belongs to the ATPase C chain family. In terms of assembly, F-type ATPases have 2 components, F(1) - the catalytic core - and F(0) - the membrane proton channel. F(1) has five subunits: alpha(3), beta(3), gamma(1), delta(1), epsilon(1). F(0) has three main subunits: a(1), b(2) and c(10-14). The alpha and beta chains form an alternating ring which encloses part of the gamma chain. F(1) is attached to F(0) by a central stalk formed by the gamma and epsilon chains, while a peripheral stalk is formed by the delta and b chains.

The protein resides in the cell inner membrane. In terms of biological role, f(1)F(0) ATP synthase produces ATP from ADP in the presence of a proton or sodium gradient. F-type ATPases consist of two structural domains, F(1) containing the extramembraneous catalytic core and F(0) containing the membrane proton channel, linked together by a central stalk and a peripheral stalk. During catalysis, ATP synthesis in the catalytic domain of F(1) is coupled via a rotary mechanism of the central stalk subunits to proton translocation. Key component of the F(0) channel; it plays a direct role in translocation across the membrane. A homomeric c-ring of between 10-14 subunits forms the central stalk rotor element with the F(1) delta and epsilon subunits. The polypeptide is ATP synthase subunit c (Idiomarina loihiensis (strain ATCC BAA-735 / DSM 15497 / L2-TR)).